The sequence spans 295 residues: Cyclic dipyrimidine nucleotide synthase CdnE (295 aa).

Residues 1–25 form a disordered region; that stretch reads MSIDWEQTFRKWSKPSSETESTKAE. Q51, S53, and N59 together coordinate UTP. Mg(2+)-binding residues include D65 and D67. Positions 67, 124, and 125 each coordinate UTP. Residues D128 and D139 each coordinate Mg(2+). UTP-binding residues include D139, N173, K201, and S220. The Pyrimidine specificity motif (R/Q)xW in donor pocket signature appears at 274 to 276; sequence QMW.

This sequence belongs to the CD-NTase family. E02 subfamily. Mg(2+) is required as a cofactor.

The catalysed reaction is 2 UTP = c-di-UMP + 2 diphosphate. It carries out the reaction UTP + CTP = cyclic CMP-UMP + 2 diphosphate. In terms of biological role, cyclic nucleotide synthase (second messenger synthase) of a CBASS antivirus system. CBASS (cyclic oligonucleotide-based antiphage signaling system) provides immunity against bacteriophage. The CD-NTase protein synthesizes cyclic nucleotides in response to infection; these serve as specific second messenger signals. The signals activate a diverse range of effectors, leading to bacterial cell death and thus abortive phage infection. A type I-B(UU) CBASS system. Functionally, cyclic dinucleotide synthase that catalyzes the synthesis of 3',3'-cyclic UMP-UMP (c-di-UMP) as the major product, and of 3',3'-cyclic CMP-UMP as a minor product, which are second messengers for cell signal transduction. This chain is Cyclic dipyrimidine nucleotide synthase CdnE, found in Legionella pneumophila.